A 140-amino-acid chain; its full sequence is Nucleoside diphosphate kinase (140 aa).

ATP-binding residues include Lys-11, Phe-59, Arg-87, Thr-93, Arg-104, and Asn-114. His-117 functions as the Pros-phosphohistidine intermediate in the catalytic mechanism.

The protein belongs to the NDK family. Homotetramer. Mg(2+) is required as a cofactor.

The protein resides in the cytoplasm. It catalyses the reaction a 2'-deoxyribonucleoside 5'-diphosphate + ATP = a 2'-deoxyribonucleoside 5'-triphosphate + ADP. The catalysed reaction is a ribonucleoside 5'-diphosphate + ATP = a ribonucleoside 5'-triphosphate + ADP. Major role in the synthesis of nucleoside triphosphates other than ATP. The ATP gamma phosphate is transferred to the NDP beta phosphate via a ping-pong mechanism, using a phosphorylated active-site intermediate. In Rickettsia felis (strain ATCC VR-1525 / URRWXCal2) (Rickettsia azadi), this protein is Nucleoside diphosphate kinase.